The following is a 620-amino-acid chain: Acetylcholinesterase 1 (620 aa).

Residues 1 to 31 (MRYSLLFFIFLPCVITAVDLIHLHDGSPLFG) form the signal peptide. An N-linked (GlcNAc...) asparagine glycan is attached at asparagine 74. An intrachain disulfide couples cysteine 82 to cysteine 109. Serine 216 serves as the catalytic Acyl-ester intermediate. An intrachain disulfide couples cysteine 270 to cysteine 286. A glycan (N-linked (GlcNAc...) asparagine) is linked at asparagine 272. Residues glutamate 346 and histidine 468 each act as charge relay system in the active site. Cysteine 430 and cysteine 558 are joined by a disulfide. N-linked (GlcNAc...) asparagine glycosylation is found at asparagine 486 and asparagine 536.

This sequence belongs to the type-B carboxylesterase/lipase family. In terms of assembly, oligomer composed of disulfide-linked homodimers.

Its subcellular location is the synapse. It localises to the secreted. It is found in the cell membrane. The enzyme catalyses acetylcholine + H2O = choline + acetate + H(+). Rapidly hydrolyzes choline released into the synapse. This Caenorhabditis briggsae protein is Acetylcholinesterase 1 (ace-1).